We begin with the raw amino-acid sequence, 138 residues long: Ribosome-binding factor A (138 aa).

Positions 112 to 138 are disordered; it reads EARTQGQAPAADVEPAPGAAPDDEAEE. The segment covering 119–131 has biased composition (low complexity); the sequence is APAADVEPAPGAA.

This sequence belongs to the RbfA family. In terms of assembly, monomer. Binds 30S ribosomal subunits, but not 50S ribosomal subunits or 70S ribosomes.

It is found in the cytoplasm. Functionally, one of several proteins that assist in the late maturation steps of the functional core of the 30S ribosomal subunit. Associates with free 30S ribosomal subunits (but not with 30S subunits that are part of 70S ribosomes or polysomes). Required for efficient processing of 16S rRNA. May interact with the 5'-terminal helix region of 16S rRNA. This chain is Ribosome-binding factor A, found in Anaeromyxobacter sp. (strain K).